The chain runs to 54 residues: Ovomucoid (54 aa).

The Kazal-like domain maps to 4-54 (VDCSDYPKPVCSLEYMPLCGSDNKTYGNKCNFCNAVADSNGTLTLSHFGKC). Intrachain disulfides connect Cys-6/Cys-36, Cys-14/Cys-33, and Cys-22/Cys-54. Asn-43 carries N-linked (GlcNAc...) asparagine glycosylation.

It localises to the secreted. The polypeptide is Ovomucoid (Guira guira (Guira cuckoo)).